Here is a 227-residue protein sequence, read N- to C-terminus: ATP phosphoribosyltransferase (227 aa).

This sequence belongs to the ATP phosphoribosyltransferase family. Short subfamily. As to quaternary structure, heteromultimer composed of HisG and HisZ subunits.

Its subcellular location is the cytoplasm. It catalyses the reaction 1-(5-phospho-beta-D-ribosyl)-ATP + diphosphate = 5-phospho-alpha-D-ribose 1-diphosphate + ATP. It participates in amino-acid biosynthesis; L-histidine biosynthesis; L-histidine from 5-phospho-alpha-D-ribose 1-diphosphate: step 1/9. Its function is as follows. Catalyzes the condensation of ATP and 5-phosphoribose 1-diphosphate to form N'-(5'-phosphoribosyl)-ATP (PR-ATP). Has a crucial role in the pathway because the rate of histidine biosynthesis seems to be controlled primarily by regulation of HisG enzymatic activity. The sequence is that of ATP phosphoribosyltransferase from Rhodospirillum rubrum (strain ATCC 11170 / ATH 1.1.1 / DSM 467 / LMG 4362 / NCIMB 8255 / S1).